The following is a 291-amino-acid chain: Pantothenate synthetase (291 aa).

30–37 contributes to the ATP binding site; it reads MGYLHVGH. Catalysis depends on histidine 37, which acts as the Proton donor. Residue glutamine 61 coordinates (R)-pantoate. Glutamine 61 is a beta-alanine binding site. Position 147 to 150 (147 to 150) interacts with ATP; sequence GEKD. Glutamine 153 is a (R)-pantoate binding site. ATP contacts are provided by residues valine 176 and 184-187; that span reads CSSR.

Belongs to the pantothenate synthetase family. In terms of assembly, homodimer.

Its subcellular location is the cytoplasm. The catalysed reaction is (R)-pantoate + beta-alanine + ATP = (R)-pantothenate + AMP + diphosphate + H(+). The protein operates within cofactor biosynthesis; (R)-pantothenate biosynthesis; (R)-pantothenate from (R)-pantoate and beta-alanine: step 1/1. In terms of biological role, catalyzes the condensation of pantoate with beta-alanine in an ATP-dependent reaction via a pantoyl-adenylate intermediate. The sequence is that of Pantothenate synthetase from Rhizobium meliloti (strain 1021) (Ensifer meliloti).